Reading from the N-terminus, the 558-residue chain is Dihydroxy-acid dehydratase (558 aa).

D81 is a Mg(2+) binding site. C122 lines the [2Fe-2S] cluster pocket. The Mg(2+) site is built by D123 and K124. K124 carries the post-translational modification N6-carboxylysine. Residue C195 participates in [2Fe-2S] cluster binding. Residue E447 participates in Mg(2+) binding. S473 functions as the Proton acceptor in the catalytic mechanism.

This sequence belongs to the IlvD/Edd family. As to quaternary structure, homodimer. [2Fe-2S] cluster is required as a cofactor. Mg(2+) serves as cofactor.

It carries out the reaction (2R)-2,3-dihydroxy-3-methylbutanoate = 3-methyl-2-oxobutanoate + H2O. The enzyme catalyses (2R,3R)-2,3-dihydroxy-3-methylpentanoate = (S)-3-methyl-2-oxopentanoate + H2O. Its pathway is amino-acid biosynthesis; L-isoleucine biosynthesis; L-isoleucine from 2-oxobutanoate: step 3/4. It functions in the pathway amino-acid biosynthesis; L-valine biosynthesis; L-valine from pyruvate: step 3/4. Functions in the biosynthesis of branched-chain amino acids. Catalyzes the dehydration of (2R,3R)-2,3-dihydroxy-3-methylpentanoate (2,3-dihydroxy-3-methylvalerate) into 2-oxo-3-methylpentanoate (2-oxo-3-methylvalerate) and of (2R)-2,3-dihydroxy-3-methylbutanoate (2,3-dihydroxyisovalerate) into 2-oxo-3-methylbutanoate (2-oxoisovalerate), the penultimate precursor to L-isoleucine and L-valine, respectively. The chain is Dihydroxy-acid dehydratase from Bacillus velezensis (strain DSM 23117 / BGSC 10A6 / LMG 26770 / FZB42) (Bacillus amyloliquefaciens subsp. plantarum).